Here is a 111-residue protein sequence, read N- to C-terminus: T cell receptor beta variable 20-1 (111 aa).

The first 15 residues, 1-15 (MLLLLLLLGPGSGLG), serve as a signal peptide directing secretion. Residues 16 to 111 (AVVSQHPSRV…DSSFYICSAR (96 aa)) form the Ig-like domain. The cysteines at positions 37 and 108 are disulfide-linked.

In terms of assembly, alpha-beta TR is a heterodimer composed of an alpha and beta chain; disulfide-linked. The alpha-beta TR is associated with the transmembrane signaling CD3 coreceptor proteins to form the TR-CD3 (TcR or TCR). The assembly of alpha-beta TR heterodimers with CD3 occurs in the endoplasmic reticulum where a single alpha-beta TR heterodimer associates with one CD3D-CD3E heterodimer, one CD3G-CD3E heterodimer and one CD247 homodimer forming a stable octameric structure. CD3D-CD3E and CD3G-CD3E heterodimers preferentially associate with TR alpha and TR beta chains, respectively. The association of the CD247 homodimer is the last step of TcR assembly in the endoplasmic reticulum and is required for transport to the cell surface.

Its subcellular location is the cell membrane. In terms of biological role, v region of the variable domain of T cell receptor (TR) beta chain that participates in the antigen recognition. Alpha-beta T cell receptors are antigen specific receptors which are essential to the immune response and are present on the cell surface of T lymphocytes. Recognize peptide-major histocompatibility (MH) (pMH) complexes that are displayed by antigen presenting cells (APC), a prerequisite for efficient T cell adaptive immunity against pathogens. Binding of alpha-beta TR to pMH complex initiates TR-CD3 clustering on the cell surface and intracellular activation of LCK that phosphorylates the ITAM motifs of CD3G, CD3D, CD3E and CD247 enabling the recruitment of ZAP70. In turn ZAP70 phosphorylates LAT, which recruits numerous signaling molecules to form the LAT signalosome. The LAT signalosome propagates signal branching to three major signaling pathways, the calcium, the mitogen-activated protein kinase (MAPK) kinase and the nuclear factor NF-kappa-B (NF-kB) pathways, leading to the mobilization of transcription factors that are critical for gene expression and essential for T cell growth and differentiation. The T cell repertoire is generated in the thymus, by V-(D)-J rearrangement. This repertoire is then shaped by intrathymic selection events to generate a peripheral T cell pool of self-MH restricted, non-autoaggressive T cells. Post-thymic interaction of alpha-beta TR with the pMH complexes shapes TR structural and functional avidity. This is T cell receptor beta variable 20-1 from Homo sapiens (Human).